Reading from the N-terminus, the 342-residue chain is S-adenosylmethionine:tRNA ribosyltransferase-isomerase (342 aa).

The protein belongs to the QueA family. As to quaternary structure, monomer.

It is found in the cytoplasm. It catalyses the reaction 7-aminomethyl-7-carbaguanosine(34) in tRNA + S-adenosyl-L-methionine = epoxyqueuosine(34) in tRNA + adenine + L-methionine + 2 H(+). Its pathway is tRNA modification; tRNA-queuosine biosynthesis. Functionally, transfers and isomerizes the ribose moiety from AdoMet to the 7-aminomethyl group of 7-deazaguanine (preQ1-tRNA) to give epoxyqueuosine (oQ-tRNA). The sequence is that of S-adenosylmethionine:tRNA ribosyltransferase-isomerase from Streptococcus pneumoniae (strain ATCC BAA-255 / R6).